The sequence spans 136 residues: Large ribosomal subunit protein bL21 (136 aa).

It belongs to the bacterial ribosomal protein bL21 family. Part of the 50S ribosomal subunit. Contacts protein L20.

Functionally, this protein binds to 23S rRNA in the presence of protein L20. This chain is Large ribosomal subunit protein bL21, found in Gloeothece citriformis (strain PCC 7424) (Cyanothece sp. (strain PCC 7424)).